The chain runs to 214 residues: Pyrrolidone-carboxylate peptidase (214 aa).

Catalysis depends on residues E78, C141, and H165.

This sequence belongs to the peptidase C15 family. As to quaternary structure, homotetramer.

It localises to the cytoplasm. The enzyme catalyses Release of an N-terminal pyroglutamyl group from a polypeptide, the second amino acid generally not being Pro.. Functionally, removes 5-oxoproline from various penultimate amino acid residues except L-proline. The protein is Pyrrolidone-carboxylate peptidase of Streptococcus pneumoniae serotype 2 (strain D39 / NCTC 7466).